Consider the following 532-residue polypeptide: Probable galacturonosyltransferase 14 (532 aa).

Topologically, residues 1 to 40 (MQLHISPSMRSITISSSNEFIDLMKIKVAARHISYRTLFH) are cytoplasmic. The helical; Signal-anchor for type II membrane protein transmembrane segment at 41 to 61 (TILILAFLLPFVFILTAVVTL) threads the bilayer. The Lumenal segment spans residues 62-532 (EGVNKCSSID…DFIKNCHILE (471 aa)). Asparagine 305, asparagine 395, asparagine 444, and asparagine 519 each carry an N-linked (GlcNAc...) asparagine glycan.

This sequence belongs to the glycosyltransferase 8 family. Expressed in roots, inflorescences, siliques, leaves and stems. Accumulates in pollen grains.

It localises to the golgi apparatus membrane. The protein operates within glycan metabolism; pectin biosynthesis. Its function is as follows. May be involved in pectin and/or xylans biosynthesis in cell walls. Together with GAUT13, required for pollen tube growth, possibly through the regulation of pectin biosynthesis and repartition in the pollen tube wall. The chain is Probable galacturonosyltransferase 14 from Arabidopsis thaliana (Mouse-ear cress).